A 595-amino-acid chain; its full sequence is UvrABC system protein C (595 aa).

In terms of domain architecture, GIY-YIG spans 14-91; that stretch reads NNPGCYLHKD…IQENMPKFNI (78 aa). The UVR domain maps to 196–231; that stretch reads DKIVNQLKAKMKDMSDQMEFERAAEYRDLIEAVSTL.

It belongs to the UvrC family. In terms of assembly, interacts with UvrB in an incision complex.

Its subcellular location is the cytoplasm. Functionally, the UvrABC repair system catalyzes the recognition and processing of DNA lesions. UvrC both incises the 5' and 3' sides of the lesion. The N-terminal half is responsible for the 3' incision and the C-terminal half is responsible for the 5' incision. This chain is UvrABC system protein C, found in Streptococcus thermophilus (strain ATCC BAA-250 / LMG 18311).